The chain runs to 175 residues: MGKIIFYEDRNFQGRSYECMSDCSDITTYMSRCQSCRVESGCFMVYERPNFMGMQFFLRRGEYHDMQRMMSMGMMFDSIRSCRYPYRAFRMRIYEREYFGGQMSELMGDCDSIMDRFRMSDCMYCHVMDGHWLMYEQAHYRGKMMYLRPGEYRSFRDMGMSGMRFMSMRRITDMC.

Beta/gamma crystallin 'Greek key' domains lie at 2–40 (GKIIFYEDRNFQGRSYECMSDCSDITTYMSRCQSCRVES), 41–86 (GCFM…RYPY), 89–121 (FRMRIYEREYFGGQMSELMGDCDSIMDRFRMSD), and 130–172 (GHWL…RRIT).

This sequence belongs to the beta/gamma-crystallin family. In terms of assembly, monomer.

Functionally, crystallins are the dominant structural components of the vertebrate eye lens. The polypeptide is Gamma-crystallin M1 (GM1) (Chiloscyllium indicum (Slender bamboo shark)).